The chain runs to 337 residues: Protein-methionine-sulfoxide reductase catalytic subunit MsrP (337 aa).

Positions 1 to 48 form a signal peptide, tat-type signal; sequence MLIKIPSRSDCSESEVTSETLYLSRRRLLGASFAGLALASGLPRLGFA. Residues N94, 97–98, C152, T187, N237, R242, and 253–255 each bind Mo-molybdopterin; these read YE and SIK.

It belongs to the MsrP family. As to quaternary structure, heterodimer of a catalytic subunit (MsrP) and a heme-binding subunit (MsrQ). It depends on Mo-molybdopterin as a cofactor. Predicted to be exported by the Tat system. The position of the signal peptide cleavage has not been experimentally proven.

Its subcellular location is the periplasm. The catalysed reaction is L-methionyl-[protein] + a quinone + H2O = L-methionyl-(S)-S-oxide-[protein] + a quinol. It carries out the reaction L-methionyl-[protein] + a quinone + H2O = L-methionyl-(R)-S-oxide-[protein] + a quinol. Its function is as follows. Part of the MsrPQ system that repairs oxidized periplasmic proteins containing methionine sulfoxide residues (Met-O), using respiratory chain electrons. Thus protects these proteins from oxidative-stress damage caused by reactive species of oxygen and chlorine generated by the host defense mechanisms. MsrPQ is essential for the maintenance of envelope integrity under bleach stress, rescuing a wide series of structurally unrelated periplasmic proteins from methionine oxidation. The catalytic subunit MsrP is non-stereospecific, being able to reduce both (R-) and (S-) diastereoisomers of methionine sulfoxide. This chain is Protein-methionine-sulfoxide reductase catalytic subunit MsrP, found in Pseudomonas aeruginosa (strain ATCC 15692 / DSM 22644 / CIP 104116 / JCM 14847 / LMG 12228 / 1C / PRS 101 / PAO1).